The sequence spans 528 residues: uncharacterized protein (528 aa).

Positions M1–V51 are disordered. A run of 2 repeats spans residues E185–Y213 and E285–L313. Residues E185 to L313 form a 2 X 29 AA repeats region. Disordered stretches follow at residues R467–T497 and T509–Y528. A compositionally biased stretch (polar residues) spans S472–D496.

This is an uncharacterized protein from Caenorhabditis elegans.